Reading from the N-terminus, the 461-residue chain is Argininosuccinate lyase (461 aa).

Belongs to the lyase 1 family. Argininosuccinate lyase subfamily.

It is found in the cytoplasm. It catalyses the reaction 2-(N(omega)-L-arginino)succinate = fumarate + L-arginine. The protein operates within amino-acid biosynthesis; L-arginine biosynthesis; L-arginine from L-ornithine and carbamoyl phosphate: step 3/3. In Aeromonas hydrophila subsp. hydrophila (strain ATCC 7966 / DSM 30187 / BCRC 13018 / CCUG 14551 / JCM 1027 / KCTC 2358 / NCIMB 9240 / NCTC 8049), this protein is Argininosuccinate lyase.